The sequence spans 126 residues: Glycine cleavage system H protein (126 aa).

Residues isoleucine 20–arginine 102 form the Lipoyl-binding domain. Lysine 61 bears the N6-lipoyllysine mark.

It belongs to the GcvH family. In terms of assembly, the glycine cleavage system is composed of four proteins: P, T, L and H. The cofactor is (R)-lipoate.

The glycine cleavage system catalyzes the degradation of glycine. The H protein shuttles the methylamine group of glycine from the P protein to the T protein. This is Glycine cleavage system H protein from Rhodospirillum rubrum (strain ATCC 11170 / ATH 1.1.1 / DSM 467 / LMG 4362 / NCIMB 8255 / S1).